A 559-amino-acid chain; its full sequence is Membrane protein insertase YidC (559 aa).

6 helical membrane passes run 5–25, 332–352, 355–375, 429–449, 474–494, and 520–540; these read IVNL…WQYF, AIDF…MNFF, YVGN…LLMF, LPIL…YVTI, LFGL…WPIL, and FMPL…LIYW.

It belongs to the OXA1/ALB3/YidC family. Type 1 subfamily. As to quaternary structure, interacts with the Sec translocase complex via SecD. Specifically interacts with transmembrane segments of nascent integral membrane proteins during membrane integration.

The protein localises to the cell inner membrane. Functionally, required for the insertion and/or proper folding and/or complex formation of integral membrane proteins into the membrane. Involved in integration of membrane proteins that insert both dependently and independently of the Sec translocase complex, as well as at least some lipoproteins. Aids folding of multispanning membrane proteins. This Rickettsia bellii (strain OSU 85-389) protein is Membrane protein insertase YidC.